The sequence spans 635 residues: Sodium- and chloride-dependent creatine transporter 1 (635 aa).

Residues Met-1 to Tyr-11 show a composition bias toward polar residues. The interval Met-1 to Pro-27 is disordered. Over Met-1–Asp-60 the chain is Cytoplasmic. A helical membrane pass occupies residues Phe-61 to Leu-81. Residues Cys-82–Gly-87 are Extracellular-facing. Residues Gly-88 to Leu-108 form a helical membrane-spanning segment. Topologically, residues Glu-109–Met-138 are cytoplasmic. A helical transmembrane segment spans residues Val-139–Leu-159. The Extracellular segment spans residues Val-160–Ala-230. Asn-192 and Asn-197 each carry an N-linked (GlcNAc...) asparagine glycan. A helical transmembrane segment spans residues Leu-231–Trp-251. Topologically, residues Lys-252–Tyr-269 are cytoplasmic. The chain crosses the membrane as a helical span at residues Val-270–Ile-290. Over Tyr-291 to Gln-304 the chain is Extracellular. Residues Val-305–Thr-325 traverse the membrane as a helical segment. Topologically, residues Ala-326–Ala-341 are cytoplasmic. The chain crosses the membrane as a helical span at residues Ile-342 to Ile-362. Over Leu-363–Thr-394 the chain is Extracellular. A helical transmembrane segment spans residues Leu-395–Leu-415. Over Asp-416–Glu-444 the chain is Cytoplasmic. The helical transmembrane segment at Ile-445–Gly-465 threads the bilayer. Topologically, residues Gly-466–Ser-479 are extracellular. A helical transmembrane segment spans residues Gly-480–Ala-500. At Asp-501–Lys-520 the chain is on the cytoplasmic side. A helical transmembrane segment spans residues Trp-521–Tyr-541. Residues His-542–Val-560 lie on the Extracellular side of the membrane. An N-linked (GlcNAc...) asparagine glycan is attached at Asn-548. The chain crosses the membrane as a helical span at residues Gly-561 to Leu-581. Residues Arg-582–Met-635 are Cytoplasmic-facing. Phosphothreonine is present on residues Thr-617 and Thr-620. The residue at position 623 (Ser-623) is a Phosphoserine.

It belongs to the sodium:neurotransmitter symporter (SNF) (TC 2.A.22) family. SLC6A8 subfamily. Post-translationally, glycosylated.

It localises to the cell membrane. Its subcellular location is the apical cell membrane. It carries out the reaction creatine(out) + chloride(out) + 2 Na(+)(out) = creatine(in) + chloride(in) + 2 Na(+)(in). Functionally, creatine:sodium symporter which mediates the uptake of creatine. Plays an important role in supplying creatine to the brain via the blood-brain barrier. This Bos taurus (Bovine) protein is Sodium- and chloride-dependent creatine transporter 1 (SLC6A8).